The chain runs to 253 residues: ATP synthase subunit b 1 (253 aa).

Residues 5-27 (GWTVALQAVNFLILVLLLRHFLY) form a helical membrane-spanning segment.

It belongs to the ATPase B chain family. In terms of assembly, F-type ATPases have 2 components, F(1) - the catalytic core - and F(0) - the membrane proton channel. F(1) has five subunits: alpha(3), beta(3), gamma(1), delta(1), epsilon(1). F(0) has three main subunits: a(1), b(2) and c(10-14). The alpha and beta chains form an alternating ring which encloses part of the gamma chain. F(1) is attached to F(0) by a central stalk formed by the gamma and epsilon chains, while a peripheral stalk is formed by the delta and b chains.

Its subcellular location is the cell inner membrane. Functionally, f(1)F(0) ATP synthase produces ATP from ADP in the presence of a proton or sodium gradient. F-type ATPases consist of two structural domains, F(1) containing the extramembraneous catalytic core and F(0) containing the membrane proton channel, linked together by a central stalk and a peripheral stalk. During catalysis, ATP synthesis in the catalytic domain of F(1) is coupled via a rotary mechanism of the central stalk subunits to proton translocation. In terms of biological role, component of the F(0) channel, it forms part of the peripheral stalk, linking F(1) to F(0). This is ATP synthase subunit b 1 from Rhodospirillum centenum (strain ATCC 51521 / SW).